The sequence spans 362 residues: Cationic peroxidase SPC4 (362 aa).

The N-terminal stretch at 1 to 31 (MSRAPTLAAAAAVAAVVLICSSSTATAADGN) is a signal peptide. 4 disulfide bridges follow: C50/C131, C83/C88, C138/C333, and C218/C245. Residue H81 is the Proton acceptor of the active site. 5 residues coordinate Ca(2+): D82, V85, G87, D89, and S91. Residue N109 is glycosylated (N-linked (GlcNAc...) asparagine). Position 111 (T111) interacts with (indol-3-yl)acetate. P181 is a substrate binding site. H211 serves as a coordination point for heme b. Residue T212 participates in Ca(2+) binding. N-linked (GlcNAc...) asparagine glycosylation is present at N234. Residues D257, T260, A263, and D265 each coordinate Ca(2+). N332 carries an N-linked (GlcNAc...) asparagine glycan.

Belongs to the peroxidase family. Classical plant (class III) peroxidase subfamily. As to quaternary structure, monomer. Heme b is required as a cofactor. The cofactor is Ca(2+). The proportions of glycoforms I and II are 35% and 65% respectively. Present in germinated and ungerminated grain, seedlings, and leaves and stem of the mature plant.

The protein resides in the secreted. It catalyses the reaction 2 a phenolic donor + H2O2 = 2 a phenolic radical donor + 2 H2O. Functionally, removal of H(2)O(2), oxidation of toxic reductants, biosynthesis and degradation of lignin, suberization, auxin catabolism, response to environmental stresses such as wounding, pathogen attack and oxidative stress. These functions might be dependent on each isozyme/isoform in each plant tissue. Has a high preference for hydroxycinnamates as substrates. Substrate preference is ferulic acid &gt; p-coumaric acid &gt; N-acetyl tyrosine methyl ester &gt; N-acetyl-tyrosine &gt; tyrosine &gt; catechol &gt; Gly-Tyr-Gly. May be involved in the formation of diferulate linkages in the plant cell wall. The chain is Cationic peroxidase SPC4 from Sorghum bicolor (Sorghum).